An 89-amino-acid chain; its full sequence is Small ribosomal subunit protein uS15 (89 aa).

It belongs to the universal ribosomal protein uS15 family. Part of the 30S ribosomal subunit. Forms a bridge to the 50S subunit in the 70S ribosome, contacting the 23S rRNA.

Functionally, one of the primary rRNA binding proteins, it binds directly to 16S rRNA where it helps nucleate assembly of the platform of the 30S subunit by binding and bridging several RNA helices of the 16S rRNA. Its function is as follows. Forms an intersubunit bridge (bridge B4) with the 23S rRNA of the 50S subunit in the ribosome. The protein is Small ribosomal subunit protein uS15 of Pasteurella multocida (strain Pm70).